Consider the following 471-residue polypeptide: Abscission/NoCut checkpoint regulator (471 aa).

Residues 39-64 (GGAGQGREGRSWGEGPRGPGLGRRDL) form a disordered region. An FYVE-type zinc finger spans residues 74 to 133 (ATMESRCYGCAVKFTLFKKEYGCKNCGRAFCSGCLSFSAAVPRTGNTQQKVCKQCHEVLT). Cys80, Cys83, Cys96, Cys99, Cys104, Cys107, Cys125, and Cys128 together coordinate Zn(2+). Ser144 carries the post-translational modification Phosphoserine. An MIM1-A motif is present at residues 174-187 (DQMIAERLARLRQE). Residue Lys207 forms a Glycyl lysine isopeptide (Lys-Gly) (interchain with G-Cter in SUMO2) linkage. Residue Thr243 is modified to Phosphothreonine. The tract at residues 271–299 (KGGGPAASLQNDLNQGGPGSTNSKRQANW) is disordered. A compositionally biased stretch (polar residues) spans 278–299 (SLQNDLNQGGPGSTNSKRQANW). A phosphoserine mark is found at Gly286 and Ser293. Positions 311–375 (EAALELREEN…RVLQQLTEEA (65 aa)) form a coiled coil. The MIM1-B motif lies at 326–339 (ILALAKRLAMLRGQ). Phosphoserine is present on Ser354. The interval 386–412 (PAEQASRPWTQPRGAEPEAQDVDPRPE) is disordered. A Phosphoserine modification is found at Ser463.

In terms of assembly, interacts (via MIM1-B) with VPS4A; interaction takes place at the midbody ring following cytokinesis checkpoint activation. Post-translationally, phosphorylated in vitro at Ser-22 by AURKB; however, phosphorylation at this site could not be confirmed in vivo. As to expression, detected in brain, heart, skeletal muscle and kidney. Expressed in the liver (at protein level).

The protein resides in the cytoplasm. Its subcellular location is the cytoskeleton. It localises to the microtubule organizing center. It is found in the centrosome. The protein localises to the cleavage furrow. The protein resides in the midbody. Its subcellular location is the midbody ring. In terms of biological role, key regulator of abscission step in cytokinesis: part of the cytokinesis checkpoint, a process required to delay abscission to prevent both premature resolution of intercellular chromosome bridges and accumulation of DNA damage. Together with CHMP4C, required to retain abscission-competent VPS4 (VPS4A and/or VPS4B) at the midbody ring until abscission checkpoint signaling is terminated at late cytokinesis. Deactivation of AURKB results in dephosphorylation of CHMP4C followed by its dissociation from ZFYVE19/ANCHR and VPS4 and subsequent abscission. The protein is Abscission/NoCut checkpoint regulator (ZFYVE19) of Homo sapiens (Human).